The following is a 235-amino-acid chain: MLNITPIPALSDNYIWAIQKDNDVIIVDPSDAVPVLAFIAKNQLNLTAILLTHNHHDHTDGMPELLSRYPQLSVYGPQEVAQFANRIVQPEDHLTLFDYDVRVIESAGHTAQHVSYLFGNEYLFCGDVLFSGGCGRVFTGNYQAQFDALQRFKALPEFVEIFPAHEYTLSNLKFAEAVLAPSCALFEIQERAEILRSRNQPTLPTTLERELQINPFLQAVDLDQFIALRHQKDNF.

His-53, His-55, Asp-57, His-58, His-109, Asp-127, and His-165 together coordinate Zn(2+).

It belongs to the metallo-beta-lactamase superfamily. Glyoxalase II family. Monomer. It depends on Zn(2+) as a cofactor.

The catalysed reaction is an S-(2-hydroxyacyl)glutathione + H2O = a 2-hydroxy carboxylate + glutathione + H(+). The protein operates within secondary metabolite metabolism; methylglyoxal degradation; (R)-lactate from methylglyoxal: step 2/2. Thiolesterase that catalyzes the hydrolysis of S-D-lactoyl-glutathione to form glutathione and D-lactic acid. The protein is Hydroxyacylglutathione hydrolase of Actinobacillus pleuropneumoniae serotype 7 (strain AP76).